The following is a 201-amino-acid chain: FMN-dependent NADH:quinone oxidoreductase (201 aa).

FMN contacts are provided by residues Ser10, 16–18 (SQS), 96–99 (MYNF), and 140–143 (SRGG).

It belongs to the azoreductase type 1 family. As to quaternary structure, homodimer. FMN is required as a cofactor.

The enzyme catalyses 2 a quinone + NADH + H(+) = 2 a 1,4-benzosemiquinone + NAD(+). It carries out the reaction N,N-dimethyl-1,4-phenylenediamine + anthranilate + 2 NAD(+) = 2-(4-dimethylaminophenyl)diazenylbenzoate + 2 NADH + 2 H(+). Its function is as follows. Quinone reductase that provides resistance to thiol-specific stress caused by electrophilic quinones. In terms of biological role, also exhibits azoreductase activity. Catalyzes the reductive cleavage of the azo bond in aromatic azo compounds to the corresponding amines. The protein is FMN-dependent NADH:quinone oxidoreductase of Escherichia coli O9:H4 (strain HS).